Here is a 665-residue protein sequence, read N- to C-terminus: Secreted LysM effector Lys3 (665 aa).

Residues 1-19 (MLWLTVSLTGFALLGVVAA) form the signal peptide. Residues asparagine 43 and asparagine 153 are each glycosylated (N-linked (GlcNAc...) asparagine). 3 LysM domains span residues 166 to 211 (RTYT…TLCL), 216 to 264 (TLRK…YICI), and 303 to 349 (KWYV…AYCV). N-linked (GlcNAc...) asparagine glycosylation is present at asparagine 234. Asparagine 398 carries an N-linked (GlcNAc...) asparagine glycan. The LysM 4 domain maps to 409 to 454 (SWSDAAKLNSCSFIAHINGVTVSQLLQWNPSLSKDSCSLSRELYYC). The N-linked (GlcNAc...) asparagine glycan is linked to asparagine 531. The disordered stretch occupies residues 585–610 (SSVSMTNSAPATATSTGGPPAPTQDG). The segment covering 592–602 (SAPATATSTGG) has biased composition (low complexity). An N-linked (GlcNAc...) asparagine glycan is attached at asparagine 614. In terms of domain architecture, LysM 5 spans 617–663 (KWHVVESGDGCWAIYTKYGITSDQLFEWNTKISKDCSNIWLGYAVCV).

This sequence belongs to the secreted LysM effector family.

Might have a role in sequestration of chitin oligosaccharides (breakdown products of fungal cell walls that are released during invasion and act as triggers of host immunity) to dampen host defense. The polypeptide is Secreted LysM effector Lys3 (Pochonia chlamydosporia (strain 123) (Metacordyceps chlamydosporia)).